A 91-amino-acid chain; its full sequence is Teretoxin Tan22.13 (91 aa).

A signal peptide spans 1–21 (MKVQILFALMMVLVTLCLGQK). Residues 22-24 (MQR) constitute a propeptide that is removed on maturation.

It belongs to the teretoxin C (TC) superfamily. Contains 4 disulfide bonds. Expressed by the venom duct.

Its subcellular location is the secreted. This is Teretoxin Tan22.13 from Terebra anilis (Auger snail).